The sequence spans 478 residues: Pyruvate kinase (478 aa).

Substrate is bound at residue arginine 36. K(+)-binding residues include asparagine 38, serine 40, and aspartate 70. 38 to 41 (NFSH) provides a ligand contact to ATP. ATP-binding residues include arginine 77 and lysine 160. Glutamate 225 serves as a coordination point for Mg(2+). Substrate contacts are provided by glycine 251, aspartate 252, and threonine 284. Aspartate 252 is a Mg(2+) binding site.

The protein belongs to the pyruvate kinase family. Homotetramer. The cofactor is Mg(2+). Requires K(+) as cofactor.

It catalyses the reaction pyruvate + ATP = phosphoenolpyruvate + ADP + H(+). Its pathway is carbohydrate degradation; glycolysis; pyruvate from D-glyceraldehyde 3-phosphate: step 5/5. Its activity is regulated as follows. Allosterically activated by AMP and by several sugar phosphates. Belongs to type II PK. This is Pyruvate kinase (pykA) from Haemophilus influenzae (strain ATCC 51907 / DSM 11121 / KW20 / Rd).